We begin with the raw amino-acid sequence, 83 residues long: Small ribosomal subunit protein bS18 (83 aa).

The protein belongs to the bacterial ribosomal protein bS18 family. Part of the 30S ribosomal subunit. Forms a tight heterodimer with protein bS6.

Its function is as follows. Binds as a heterodimer with protein bS6 to the central domain of the 16S rRNA, where it helps stabilize the platform of the 30S subunit. This is Small ribosomal subunit protein bS18 from Tropheryma whipplei (strain TW08/27) (Whipple's bacillus).